A 347-amino-acid chain; its full sequence is Dolichyl-diphosphooligosaccharide--protein glycosyltransferase subunit TUSC3 (347 aa).

Residues Met1–Gly41 form the signal peptide. The Lumenal segment spans residues Gln42–Pro196. Residues Trp59–Asp187 form the Thioredoxin domain. The N-linked (GlcNAc...) asparagine glycan is linked to Asn83. An intrachain disulfide couples Cys99 to Cys102. A helical transmembrane segment spans residues Asn197–Leu217. Topologically, residues Arg218–Asn221 are cytoplasmic. The helical transmembrane segment at Leu222–Met242 threads the bilayer. Topologically, residues Thr243 to Gln276 are lumenal. The helical transmembrane segment at Phe277–Leu297 threads the bilayer. Residues Leu298–Arg312 are Cytoplasmic-facing. A helical membrane pass occupies residues Ile313–Phe333. The Lumenal portion of the chain corresponds to Arg334–Lys347.

Belongs to the OST3/OST6 family. In terms of assembly, accessory component of the STT3B-containing form of the oligosaccharyltransferase (OST) complex. OST exists in two different complex forms which contain common core subunits RPN1, RPN2, OST48, OST4, DAD1 and TMEM258, either STT3A or STT3B as catalytic subunits, and form-specific accessory subunits. OST can form stable complexes with the Sec61 complex or with both the Sec61 and TRAP complexes. The association of TUSC3 or MAGT1 with the STT3B-containing complex seems to be mutually exclusvice.

The protein resides in the endoplasmic reticulum membrane. Its pathway is protein modification; protein glycosylation. Acts as accessory component of the N-oligosaccharyl transferase (OST) complex which catalyzes the transfer of a high mannose oligosaccharide from a lipid-linked oligosaccharide donor to an asparagine residue within an Asn-X-Ser/Thr consensus motif in nascent polypeptide chains. Involved in N-glycosylation of STT3B-dependent substrates. Specifically required for the glycosylation of a subset of acceptor sites that are near cysteine residues; in this function seems to act redundantly with MAGT1. In its oxidized form proposed to form transient mixed disulfides with a glycoprotein substrate to facilitate access of STT3B to the unmodified acceptor site. Also has oxidoreductase-independent functions in the STT3B-containing OST complex possibly involving substrate recognition. Could indirectly play a role in Mg(2+) transport. This is Dolichyl-diphosphooligosaccharide--protein glycosyltransferase subunit TUSC3 (Tusc3) from Mus musculus (Mouse).